The primary structure comprises 323 residues: MRIANKFLVPKESENQRIDQFCLKILPLIKRSDFFKYLRLGKVLLNKTKPQVNTRLKTKDEIAFLFDINPYLQTNNDYLSLDLVKDKLKIIFEDENIIVVDKPTGIVCQPDKKHSIINLSNMLLKHCGYRQFDSNKLNFYPQFAHRIDRNTSGIVIGAKTNKALKELNKVFKNNHLTKRYKGLVFGQFNHLGLQTAYWKKDNNNGIVTVKWKPFPEAKKISTFFENSSYIAQKDMSLITIRLISGRTHQIRACLNLFSNQLVGDKKYSLIQFKNRNNKYKHQALHAYELVFPKLETSKFPILTNYSLMQFKSKIVPWFEYLIQ.

One can recognise an S4 RNA-binding domain in the interval 16-95; sequence QRIDQFCLKI…DKLKIIFEDE (80 aa). The active site involves Asp-148.

It belongs to the pseudouridine synthase RluA family.

The enzyme catalyses a uridine in RNA = a pseudouridine in RNA. This is an uncharacterized protein from Mycoplasma genitalium (strain ATCC 33530 / DSM 19775 / NCTC 10195 / G37) (Mycoplasmoides genitalium).